We begin with the raw amino-acid sequence, 389 residues long: (S)-8-oxocitronellyl enol synthase CYC1 (389 aa).

NADP(+) contacts are provided by residues 34 to 36 (TGI), 62 to 63 (RR), 80 to 81 (DV), 104 to 105 (AW), and Gln138. Residues Lys142 and Tyr174 contribute to the active site. The substrate site is built by Lys142 and Tyr174. Residues Tyr174, Val201, and 208-210 (SMM) each bind NADP(+). Ser350 contacts substrate.

Belongs to the short-chain dehydrogenases/reductases (SDR) family. Highly divergent.

The catalysed reaction is (S)-8-oxocitronellyl enol + NADP(+) = (6E)-8-oxogeranial + NADPH + H(+). It carries out the reaction (S)-8-oxocitronellyl enol + NAD(+) = (6E)-8-oxogeranial + NADH + H(+). Iridoid synthase that catalyzes the first step in generation of the iridoid ring scaffold using the linear monoterpene (6E)-8-oxogeranial as substrate. Iridoids comprise a large family of distinctive bicyclic monoterpenes that possess a wide range of pharmacological activities, including anticancer, anti-inflammatory, antifungal and antibacterial activities. This chain is (S)-8-oxocitronellyl enol synthase CYC1, found in Camptotheca acuminata (Happy tree).